Here is a 183-residue protein sequence, read N- to C-terminus: Shikimate kinase (183 aa).

15-20 (GSGKST) is a binding site for ATP. Serine 19 serves as a coordination point for Mg(2+). The substrate site is built by aspartate 37, arginine 61, and glycine 85. Arginine 123 lines the ATP pocket. Arginine 142 contacts substrate.

It belongs to the shikimate kinase family. Monomer. Mg(2+) is required as a cofactor.

It is found in the cytoplasm. It carries out the reaction shikimate + ATP = 3-phosphoshikimate + ADP + H(+). It participates in metabolic intermediate biosynthesis; chorismate biosynthesis; chorismate from D-erythrose 4-phosphate and phosphoenolpyruvate: step 5/7. In terms of biological role, catalyzes the specific phosphorylation of the 3-hydroxyl group of shikimic acid using ATP as a cosubstrate. This is Shikimate kinase from Paracidovorax citrulli (strain AAC00-1) (Acidovorax citrulli).